A 202-amino-acid polypeptide reads, in one-letter code: Protein cuti-1 (202 aa).

Topologically, residues 1 to 37 are cytoplasmic; sequence MPNDRVAPLPPNFVYSPHDKFYYAPATCNSMHYTTAS. A helical membrane pass occupies residues 38-58; the sequence is YISAFIEFLVMGTGAICFYVM. Topologically, residues 59 to 68 are extracellular; the sequence is SHKSDSIGKW. Residues 69-89 traverse the membrane as a helical segment; it reads LFYIQAGITVLSLLTSALMAF. The Cytoplasmic segment spans residues 90-107; that stretch reads GLWKENPQMLGSKLKFIE. Residues 108–128 traverse the membrane as a helical segment; that stretch reads FIICFLLIWAVISIVCMAFGI. At 129 to 148 the chain is on the extracellular side; it reads QFTRQVFGIFGKVHRIEQDY. A helical membrane pass occupies residues 149–169; it reads GPIWPFNIAVVSFFTAAIAIW. Topologically, residues 170-202 are cytoplasmic; that stretch reads TRIIIQGAADYLYDKAYFADKQNVELRESSKTR.

As to quaternary structure, interacts with vps-39.

It localises to the cell membrane. Its subcellular location is the cytoplasm. Functionally, involved in cuticle formation and ensures cuticle shedding during larval development. Plays a role in maintaining the hypodermis. In association with vps-39, may play a role in vesicle tethering. This is Protein cuti-1 from Caenorhabditis elegans.